The chain runs to 464 residues: Sugar transporter ERD6-like 1 (464 aa).

The next 12 membrane-spanning stretches (helical) occupy residues 23–43, 72–92, 95–115, 125–145, 156–176, 180–200, 263–283, 298–318, 326–346, 359–379, 399–419, and 424–444; these read ITCG…VYGC, VMTL…AVIG, QTMW…AFAH, GFLG…IAEI, FSNQ…GNFF, TLAL…FFIP, LIIG…AISA, IGTS…MFAV, LLMS…LSYY, PILI…LGGL, LVTV…NFMM, and FGTY…VWTL.

The protein belongs to the major facilitator superfamily. Sugar transporter (TC 2.A.1.1) family.

The protein resides in the membrane. Functionally, sugar transporter. This Arabidopsis thaliana (Mouse-ear cress) protein is Sugar transporter ERD6-like 1 (SUGTL4).